We begin with the raw amino-acid sequence, 457 residues long: Siroheme synthase (457 aa).

The precorrin-2 dehydrogenase /sirohydrochlorin ferrochelatase stretch occupies residues M1 to T204. Residues D22–V23 and L43–T44 contribute to the NAD(+) site. S128 bears the Phosphoserine mark. The tract at residues G216 to H457 is uroporphyrinogen-III C-methyltransferase. P225 is an S-adenosyl-L-methionine binding site. The active-site Proton acceptor is the D248. K270 serves as the catalytic Proton donor. S-adenosyl-L-methionine is bound by residues G301–D303, I306, T331–A332, M382, and G411.

In the N-terminal section; belongs to the precorrin-2 dehydrogenase / sirohydrochlorin ferrochelatase family. The protein in the C-terminal section; belongs to the precorrin methyltransferase family.

It carries out the reaction uroporphyrinogen III + 2 S-adenosyl-L-methionine = precorrin-2 + 2 S-adenosyl-L-homocysteine + H(+). It catalyses the reaction precorrin-2 + NAD(+) = sirohydrochlorin + NADH + 2 H(+). The enzyme catalyses siroheme + 2 H(+) = sirohydrochlorin + Fe(2+). The protein operates within cofactor biosynthesis; adenosylcobalamin biosynthesis; precorrin-2 from uroporphyrinogen III: step 1/1. It functions in the pathway cofactor biosynthesis; adenosylcobalamin biosynthesis; sirohydrochlorin from precorrin-2: step 1/1. Its pathway is porphyrin-containing compound metabolism; siroheme biosynthesis; precorrin-2 from uroporphyrinogen III: step 1/1. It participates in porphyrin-containing compound metabolism; siroheme biosynthesis; siroheme from sirohydrochlorin: step 1/1. The protein operates within porphyrin-containing compound metabolism; siroheme biosynthesis; sirohydrochlorin from precorrin-2: step 1/1. Its function is as follows. Multifunctional enzyme that catalyzes the SAM-dependent methylations of uroporphyrinogen III at position C-2 and C-7 to form precorrin-2 via precorrin-1. Then it catalyzes the NAD-dependent ring dehydrogenation of precorrin-2 to yield sirohydrochlorin. Finally, it catalyzes the ferrochelation of sirohydrochlorin to yield siroheme. The chain is Siroheme synthase from Salmonella arizonae (strain ATCC BAA-731 / CDC346-86 / RSK2980).